The chain runs to 346 residues: NADH-ubiquinone oxidoreductase chain 2 (346 aa).

The next 11 helical transmembrane spans lie at M1 to I21, H25 to S45, F60 to A80, C95 to F115, L124 to M144, L149 to G169, I178 to V195, L200 to L219, A242 to P262, E274 to L294, and A326 to V346.

Belongs to the complex I subunit 2 family.

It localises to the mitochondrion inner membrane. It carries out the reaction a ubiquinone + NADH + 5 H(+)(in) = a ubiquinol + NAD(+) + 4 H(+)(out). Core subunit of the mitochondrial membrane respiratory chain NADH dehydrogenase (Complex I) that is believed to belong to the minimal assembly required for catalysis. Complex I functions in the transfer of electrons from NADH to the respiratory chain. The immediate electron acceptor for the enzyme is believed to be ubiquinone. In Sibirionetta formosa (Baikal teal), this protein is NADH-ubiquinone oxidoreductase chain 2 (MT-ND2).